Here is a 65-residue protein sequence, read N- to C-terminus: Urease accessory protein UreI (65 aa).

Functionally, probably facilitates nickel incorporation. May constitute a multicomponent high-affinity nickel transporter. Not essential for the expression of catalytically active urease. The polypeptide is Urease accessory protein UreI (ureI) (Bacillus sp. (strain TB-90)).